Here is a 232-residue protein sequence, read N- to C-terminus: Flagellar L-ring protein (232 aa).

Positions 1–21 (MQKNAAHTYAISSLLVLSLTG) are cleaved as a signal peptide. Cys22 carries N-palmitoyl cysteine lipidation. A lipid anchor (S-diacylglycerol cysteine) is attached at Cys22.

This sequence belongs to the FlgH family. In terms of assembly, the basal body constitutes a major portion of the flagellar organelle and consists of four rings (L,P,S, and M) mounted on a central rod.

The protein localises to the cell outer membrane. It localises to the bacterial flagellum basal body. Functionally, assembles around the rod to form the L-ring and probably protects the motor/basal body from shearing forces during rotation. The chain is Flagellar L-ring protein from Escherichia coli O7:K1 (strain IAI39 / ExPEC).